The primary structure comprises 223 residues: NAD(P)H-hydrate epimerase (223 aa).

One can recognise a YjeF N-terminal domain in the interval Ala9–Leu211. Residue Asn60 to Asp64 coordinates (6S)-NADPHX. 2 residues coordinate K(+): Asn61 and Asp120. (6S)-NADPHX contacts are provided by residues Gly124–Pro130 and Asp153. Position 156 (Ser156) interacts with K(+).

Belongs to the NnrE/AIBP family. Requires K(+) as cofactor.

It catalyses the reaction (6R)-NADHX = (6S)-NADHX. The catalysed reaction is (6R)-NADPHX = (6S)-NADPHX. Functionally, catalyzes the epimerization of the S- and R-forms of NAD(P)HX, a damaged form of NAD(P)H that is a result of enzymatic or heat-dependent hydration. This is a prerequisite for the S-specific NAD(P)H-hydrate dehydratase to allow the repair of both epimers of NAD(P)HX. The chain is NAD(P)H-hydrate epimerase from Entamoeba histolytica (strain ATCC 30459 / HM-1:IMSS / ABRM).